We begin with the raw amino-acid sequence, 268 residues long: 4-hydroxy-tetrahydrodipicolinate reductase (268 aa).

9 to 14 contacts NAD(+); that stretch reads GCSGRM. Arg-36 is a binding site for NADP(+). NAD(+)-binding positions include 98 to 100 and 122 to 125; these read GTT and APNT. The active-site Proton donor/acceptor is the His-155. His-156 is a binding site for (S)-2,3,4,5-tetrahydrodipicolinate. Catalysis depends on Lys-159, which acts as the Proton donor. (S)-2,3,4,5-tetrahydrodipicolinate is bound at residue 165 to 166; sequence GT.

The protein belongs to the DapB family.

It is found in the cytoplasm. The enzyme catalyses (S)-2,3,4,5-tetrahydrodipicolinate + NAD(+) + H2O = (2S,4S)-4-hydroxy-2,3,4,5-tetrahydrodipicolinate + NADH + H(+). The catalysed reaction is (S)-2,3,4,5-tetrahydrodipicolinate + NADP(+) + H2O = (2S,4S)-4-hydroxy-2,3,4,5-tetrahydrodipicolinate + NADPH + H(+). Its pathway is amino-acid biosynthesis; L-lysine biosynthesis via DAP pathway; (S)-tetrahydrodipicolinate from L-aspartate: step 4/4. In terms of biological role, catalyzes the conversion of 4-hydroxy-tetrahydrodipicolinate (HTPA) to tetrahydrodipicolinate. This Colwellia psychrerythraea (strain 34H / ATCC BAA-681) (Vibrio psychroerythus) protein is 4-hydroxy-tetrahydrodipicolinate reductase.